A 446-amino-acid polypeptide reads, in one-letter code: tRNA-2-methylthio-N(6)-dimethylallyladenosine synthase (446 aa).

Positions 2–122 (KKAYVKSYGC…LPDLLRQSRE (121 aa)) constitute an MTTase N-terminal domain. Residues C11, C47, C85, C157, C161, and C164 each coordinate [4Fe-4S] cluster. The Radical SAM core domain occupies 143 to 375 (RNRGVTGFLT…QDLLDRQRHA (233 aa)). One can recognise a TRAM domain in the interval 378-440 (AASVGTLTEI…SNSLFGETLE (63 aa)).

It belongs to the methylthiotransferase family. MiaB subfamily. Monomer. It depends on [4Fe-4S] cluster as a cofactor.

Its subcellular location is the cytoplasm. It carries out the reaction N(6)-dimethylallyladenosine(37) in tRNA + (sulfur carrier)-SH + AH2 + 2 S-adenosyl-L-methionine = 2-methylsulfanyl-N(6)-dimethylallyladenosine(37) in tRNA + (sulfur carrier)-H + 5'-deoxyadenosine + L-methionine + A + S-adenosyl-L-homocysteine + 2 H(+). In terms of biological role, catalyzes the methylthiolation of N6-(dimethylallyl)adenosine (i(6)A), leading to the formation of 2-methylthio-N6-(dimethylallyl)adenosine (ms(2)i(6)A) at position 37 in tRNAs that read codons beginning with uridine. The protein is tRNA-2-methylthio-N(6)-dimethylallyladenosine synthase of Methylorubrum extorquens (strain PA1) (Methylobacterium extorquens).